The sequence spans 340 residues: 3-isopropylmalate dehydrogenase (340 aa).

4 residues coordinate substrate: arginine 88, arginine 98, arginine 122, and aspartate 212. Positions 212, 236, and 240 each coordinate Mg(2+). 272 to 284 (GSAPDIMGKGIAD) lines the NAD(+) pocket.

The protein belongs to the isocitrate and isopropylmalate dehydrogenases family. LeuB type 2 subfamily. Homodimer. Mg(2+) is required as a cofactor. It depends on Mn(2+) as a cofactor.

It is found in the cytoplasm. It catalyses the reaction (2R,3S)-3-isopropylmalate + NAD(+) = 4-methyl-2-oxopentanoate + CO2 + NADH. The protein operates within amino-acid biosynthesis; L-leucine biosynthesis; L-leucine from 3-methyl-2-oxobutanoate: step 3/4. Its function is as follows. Catalyzes the oxidation of 3-carboxy-2-hydroxy-4-methylpentanoate (3-isopropylmalate) to 3-carboxy-4-methyl-2-oxopentanoate. The product decarboxylates to 4-methyl-2 oxopentanoate. This is 3-isopropylmalate dehydrogenase from Corynebacterium efficiens (strain DSM 44549 / YS-314 / AJ 12310 / JCM 11189 / NBRC 100395).